The primary structure comprises 283 residues: Protein MGARP (283 aa).

The interval 1 to 36 is disordered; sequence MYLRRAVSKTLALPRRAPPGPAPLGKDASLRRMSSR. At 1–41 the chain is on the cytoplasmic side; it reads MYLRRAVSKTLALPRRAPPGPAPLGKDASLRRMSSRKFPGT. The helical; Anchor for type IV membrane protein transmembrane segment at 42–64 threads the bilayer; that stretch reads SGSNMIYYLVVGVTVSAGGYYTY. Residues 65–283 lie on the Mitochondrial intermembrane side of the membrane; sequence KALTSKQVRR…VTEETASPQG (219 aa). 2 disordered regions span residues 78-101 and 118-283; these read VAEP…EHVA and AESV…SPQG. Positions 128-160 are enriched in low complexity; sequence EAAVVLPEESQASAPSEVPAEAAVVEASLSSSE. Composition is skewed to polar residues over residues 171–184 and 199–220; these read VETT…TQEV and ADTS…QEGA. A compositionally biased stretch (basic and acidic residues) spans 221 to 245; the sequence is DTTKEEADNSKEAEGTTTEDPRSIS.

Interacts with RHOT1/Miro-1, RHOT2/Miro-2, TRAK1/OIP106 and TRAK2/GRIF1. Expressed in the ovary, testis, brain, adrenal glands and the compartments of the visual nervous system. Expressed in corneal endothelium (CE) (at protein level). Expressed in steroidogenic tissues with the highest level of expression observed in the adrenal gland. Weakly expressed in placenta. Weakly expressed in astrocytes and neurons under normoxia. Strongly expressed in astrocytes and neurons under hypoxia. Expressed in each layer of the retina, with particularly higher staining in the inner segment of the photoreceptor (IS), the outer plexiform layer (OPL) and the ganglion cell layer (GCL).

The protein localises to the mitochondrion. Its subcellular location is the mitochondrion outer membrane. It is found in the mitochondrion inner membrane. In terms of biological role, plays a role in the trafficking of mitochondria along microtubules. Regulates the kinesin-mediated axonal transport of mitochondria to nerve terminals along microtubules during hypoxia. Participates in the translocation of TRAK2/GRIF1 from the cytoplasm to the mitochondrion. Also plays a role in steroidogenesis through maintenance of mitochondrial abundance and morphology. Plays an inhibitory role during neocortex development by regulating mitochondrial morphology, distribution and motility in neocortical neurons. This chain is Protein MGARP (Mgarp), found in Mus musculus (Mouse).